The primary structure comprises 510 residues: MEIRADEISRIIREQIKDYGKKVEVAETGSILSQADGVARIYGLAGAAAGELLEFPGGIRGLVLNLEEDNVGAAIMGPYEHIREGDPVKRTGLIAEVPVGEELLGRVVDGLGNPIDGRGPLNAKHHRKIEIKAPGIVKRKSVHEPMQTGLKAIDALVPIGRGQRELILGDRQTGKTAVAIDTILNNKGNNLYCFYVAIGQKQSTVARVVDTLKKYGAMEYTTVISASASDPAPMQYLAPYTGVTMAEYFRDSGRHALIIYDDLSKQAVAYRQLSLLLRRPPGREAYPGDVFYLHSRLLERAAKLSDKEGAGSLTALPIIETQAGDVSAYIPTNVISITDGQIFLESNLFYQGVRPAINVGISVSRVGGSAQIKAMKQVAGSLKLDLAQYRELAAFAQFGSDLDKATQETLARGERLVELLKQGQYAPLSVEKQVIQIYAGTQKDTDGQNWIRAVPTEQVVRYMRELIEFLDARHPGIAKAIAEKKALDDGIRKDLDAALREFAGIFKIEG.

Position 169-176 (169-176 (GDRQTGKT)) interacts with ATP.

Belongs to the ATPase alpha/beta chains family. In terms of assembly, F-type ATPases have 2 components, CF(1) - the catalytic core - and CF(0) - the membrane proton channel. CF(1) has five subunits: alpha(3), beta(3), gamma(1), delta(1), epsilon(1). CF(0) has three main subunits: a(1), b(2) and c(9-12). The alpha and beta chains form an alternating ring which encloses part of the gamma chain. CF(1) is attached to CF(0) by a central stalk formed by the gamma and epsilon chains, while a peripheral stalk is formed by the delta and b chains.

The protein localises to the cell inner membrane. It catalyses the reaction ATP + H2O + 4 H(+)(in) = ADP + phosphate + 5 H(+)(out). Its function is as follows. Produces ATP from ADP in the presence of a proton gradient across the membrane. The alpha chain is a regulatory subunit. The sequence is that of ATP synthase subunit alpha from Anaeromyxobacter dehalogenans (strain 2CP-1 / ATCC BAA-258).